We begin with the raw amino-acid sequence, 228 residues long: CD302 antigen (228 aa).

Residues 1-20 form the signal peptide; the sequence is MPHAALSSLVLLSLATAIVA. Topologically, residues 21–165 are extracellular; that stretch reads DCPSSTWVQF…YDKKYLSDNH (145 aa). Residues 30-149 form the C-type lectin domain; sequence FQGSCYAFLQ…CEISSVEGTL (120 aa). N-linked (GlcNAc...) asparagine glycosylation occurs at Asn-107. Cysteines 125 and 140 form a disulfide. Residues 166-186 form a helical membrane-spanning segment; it reads ILISTLVIASTVTLAVLGAII. Residues 187–228 lie on the Cytoplasmic side of the membrane; it reads WFLYRRNARSGFTSFSPAPLSPYSDGCALVVAEEDEYAVQLD.

The protein resides in the membrane. It localises to the cell projection. The protein localises to the filopodium. It is found in the cytoplasm. Its subcellular location is the cell cortex. The protein resides in the microvillus. In terms of biological role, potential multifunctional C-type lectin receptor that may play roles in endocytosis and phagocytosis as well as in cell adhesion and migration. The sequence is that of CD302 antigen (Cd302) from Mus musculus (Mouse).